We begin with the raw amino-acid sequence, 199 residues long: Shikimate kinase (199 aa).

Position 12–17 (12–17) interacts with ATP; sequence GAGKST. Residue S16 participates in Mg(2+) binding. D34, R58, and G80 together coordinate substrate. Position 117 (R117) interacts with ATP. R136 contributes to the substrate binding site. A disordered region spans residues 174–199; the sequence is VSGGDRKSSEAERSGAPLRKSSEVVK. Positions 177-186 are enriched in basic and acidic residues; that stretch reads GDRKSSEAER.

Belongs to the shikimate kinase family. As to quaternary structure, monomer. Requires Mg(2+) as cofactor.

Its subcellular location is the cytoplasm. It catalyses the reaction shikimate + ATP = 3-phosphoshikimate + ADP + H(+). Its pathway is metabolic intermediate biosynthesis; chorismate biosynthesis; chorismate from D-erythrose 4-phosphate and phosphoenolpyruvate: step 5/7. Its function is as follows. Catalyzes the specific phosphorylation of the 3-hydroxyl group of shikimic acid using ATP as a cosubstrate. The sequence is that of Shikimate kinase from Mycobacterium leprae (strain TN).